Consider the following 396-residue polypeptide: 1-deoxy-D-xylulose 5-phosphate reductoisomerase (396 aa).

The NADPH site is built by Thr13, Gly14, Ser15, Ile16, and Asn127. Lys128 is a 1-deoxy-D-xylulose 5-phosphate binding site. Residue Glu129 coordinates NADPH. Asp153 provides a ligand contact to Mn(2+). The 1-deoxy-D-xylulose 5-phosphate site is built by Ser154, Glu155, Ser184, and His207. A Mn(2+)-binding site is contributed by Glu155. An NADPH-binding site is contributed by Gly213. 4 residues coordinate 1-deoxy-D-xylulose 5-phosphate: Ser220, Asn225, Lys226, and Glu229. A Mn(2+)-binding site is contributed by Glu229.

The protein belongs to the DXR family. Requires Mg(2+) as cofactor. Mn(2+) serves as cofactor.

The enzyme catalyses 2-C-methyl-D-erythritol 4-phosphate + NADP(+) = 1-deoxy-D-xylulose 5-phosphate + NADPH + H(+). The protein operates within isoprenoid biosynthesis; isopentenyl diphosphate biosynthesis via DXP pathway; isopentenyl diphosphate from 1-deoxy-D-xylulose 5-phosphate: step 1/6. In terms of biological role, catalyzes the NADPH-dependent rearrangement and reduction of 1-deoxy-D-xylulose-5-phosphate (DXP) to 2-C-methyl-D-erythritol 4-phosphate (MEP). The sequence is that of 1-deoxy-D-xylulose 5-phosphate reductoisomerase from Pseudomonas syringae pv. tomato (strain ATCC BAA-871 / DC3000).